Consider the following 163-residue polypeptide: Nucleotide-binding protein GK0742 (163 aa).

This sequence belongs to the YajQ family.

In terms of biological role, nucleotide-binding protein. This Geobacillus kaustophilus (strain HTA426) protein is Nucleotide-binding protein GK0742.